The following is a 178-amino-acid chain: DELTA-miturgitoxin-Cp3a (178 aa).

Positions 1–18 (MKALYLLGLLAFLYSCSS) are cleaved as a signal peptide. A propeptide spanning residues 19–46 (ENVYDLQPESSEEENPGTFLEAIQEQSR) is cleaved from the precursor. Positions 43 to 46 (EQSR) match the Processing quadruplet motif motif. 8 disulfide bridges follow: C48–C63, C55–C72, C62–C86, C74–C84, C113–C128, C120–C137, C127–C155, and C139–C153.

Belongs to the spider toxin CSTX family. Double-CSTX subfamily. Post-translationally, cleavage of the propeptide depends on the processing quadruplet motif (XXXR, with at least one of X being E). Expressed by the venom gland.

It localises to the secreted. Spider venom toxin that exhibits cytolytic activity by forming an alpha-helix across the membrane. Lethal to insect larvae. The sequence is that of DELTA-miturgitoxin-Cp3a from Cheiracanthium punctorium (Yellow sac spider).